The chain runs to 402 residues: Ketol-acid reductoisomerase, mitochondrial (402 aa).

The N-terminal 26 residues, 1–26 (MAARNCTKALRPLARQLATPAVQRRT), are a transit peptide targeting the mitochondrion. In terms of domain architecture, KARI N-terminal Rossmann spans 63-252 (KEEVHERADW…AVGSGYLYET (190 aa)). NADP(+) is bound by residues 90–99 (GYGSQGHGQG), 114–119 (RKNGKS), and 152–156 (SDAAQ). His-177 is a catalytic residue. In terms of domain architecture, KARI C-terminal knotted spans 253 to 400 (TFEKEVYSDL…KAVRSLRPEN (148 aa)). Positions 261, 265, 297, and 301 each coordinate Mg(2+). Ser-323 is a binding site for substrate.

This sequence belongs to the ketol-acid reductoisomerase family. It depends on Mg(2+) as a cofactor.

The protein resides in the mitochondrion. It carries out the reaction (2R)-2,3-dihydroxy-3-methylbutanoate + NADP(+) = (2S)-2-acetolactate + NADPH + H(+). The catalysed reaction is (2R,3R)-2,3-dihydroxy-3-methylpentanoate + NADP(+) = (S)-2-ethyl-2-hydroxy-3-oxobutanoate + NADPH + H(+). It participates in amino-acid biosynthesis; L-isoleucine biosynthesis; L-isoleucine from 2-oxobutanoate: step 2/4. Its pathway is amino-acid biosynthesis; L-valine biosynthesis; L-valine from pyruvate: step 2/4. This Neurospora crassa (strain ATCC 24698 / 74-OR23-1A / CBS 708.71 / DSM 1257 / FGSC 987) protein is Ketol-acid reductoisomerase, mitochondrial (ilv-2).